The sequence spans 160 residues: NADH-quinone oxidoreductase subunit B (160 aa).

The [4Fe-4S] cluster site is built by Cys37, Cys38, Cys102, and Cys132.

The protein belongs to the complex I 20 kDa subunit family. NDH-1 is composed of 14 different subunits. Subunits NuoB, C, D, E, F, and G constitute the peripheral sector of the complex. The cofactor is [4Fe-4S] cluster.

Its subcellular location is the cell inner membrane. It carries out the reaction a quinone + NADH + 5 H(+)(in) = a quinol + NAD(+) + 4 H(+)(out). In terms of biological role, NDH-1 shuttles electrons from NADH, via FMN and iron-sulfur (Fe-S) centers, to quinones in the respiratory chain. Couples the redox reaction to proton translocation (for every two electrons transferred, four hydrogen ions are translocated across the cytoplasmic membrane), and thus conserves the redox energy in a proton gradient. The sequence is that of NADH-quinone oxidoreductase subunit B from Cupriavidus metallidurans (strain ATCC 43123 / DSM 2839 / NBRC 102507 / CH34) (Ralstonia metallidurans).